The sequence spans 682 residues: Potassium-transporting ATPase ATP-binding subunit (682 aa).

4 helical membrane-spanning segments follow: residues 34–54, 58–78, 219–239, and 254–274; these read PVMFVVWAGSVLTTLLTLAMV, IAGSALFTGIISLWLWFTVLF, IALTILLIALTIVFLLATATL, and VLVALLVCLIPTTIGGLLSAI. The active-site 4-aspartylphosphate intermediate is Asp-307. ATP is bound by residues Asp-344, Glu-348, 377-384, and Lys-395; that span reads FTAQSRMS. Residues Asp-518 and Asp-522 each coordinate Mg(2+). 3 helical membrane passes run 588–608, 616–636, and 662–682; these read FAIIPAAFAATYPQLNALNVM, AILSAVIFNALIIIFLIPLAL, and LVVPFIGIKVIDVLLTLLGLA.

This sequence belongs to the cation transport ATPase (P-type) (TC 3.A.3) family. Type IA subfamily. In terms of assembly, the system is composed of three essential subunits: KdpA, KdpB and KdpC.

The protein localises to the cell inner membrane. It carries out the reaction K(+)(out) + ATP + H2O = K(+)(in) + ADP + phosphate + H(+). Its function is as follows. Part of the high-affinity ATP-driven potassium transport (or Kdp) system, which catalyzes the hydrolysis of ATP coupled with the electrogenic transport of potassium into the cytoplasm. This subunit is responsible for energy coupling to the transport system and for the release of the potassium ions to the cytoplasm. The chain is Potassium-transporting ATPase ATP-binding subunit from Salmonella enteritidis PT4 (strain P125109).